Reading from the N-terminus, the 314-residue chain is Melanoma-associated antigen 3 (314 aa).

Residues 1–20 are compositionally biased toward basic and acidic residues; it reads MPLEQRSQHCKPEEGLEARG. The disordered stretch occupies residues 1 to 99; the sequence is MPLEQRSQHC…QEEEGPSTFP (99 aa). Low complexity predominate over residues 21–44; the sequence is EALGLVGAQAPATEEQEAASSSST. Residues 65-87 are compositionally biased toward polar residues; that stretch reads PQGASSLPTTMNYPLWSQSYEDS. Positions 109-308 constitute an MAGE domain; the sequence is LSRKVAELVH…ISYPPLHEWV (200 aa).

In terms of assembly, interacts with TRIM28. Ubiquitinated by the DCX(DCAF12) complex specifically recognizes the diglutamate (Glu-Glu) at the C-terminus, leading to its degradation. In terms of tissue distribution, expressed in many tumors of several types, such as melanoma, head and neck squamous cell carcinoma, lung carcinoma and breast carcinoma, but not in normal tissues except for testes and placenta. Never expressed in kidney tumors, Leukemias and lymphomas.

Its function is as follows. Activator of ubiquitin ligase activity of RING-type zinc finger-containing E3 ubiquitin-protein ligases that acts as a repressor of autophagy. May enhance ubiquitin ligase activity of TRIM28 and stimulate p53/TP53 ubiquitination by TRIM28. Proposed to act through recruitment and/or stabilization of the Ubl-conjugating enzyme (E2) at the E3:substrate complex. May play a role in embryonal development and tumor transformation or aspects of tumor progression. In vitro promotes cell viability in melanoma cell lines. Antigen recognized on a melanoma by autologous cytolytic T-lymphocytes. This Homo sapiens (Human) protein is Melanoma-associated antigen 3.